The following is a 335-amino-acid chain: Probable cytosolic iron-sulfur protein assembly protein Ciao1 (335 aa).

7 WD repeats span residues 12 to 51 (GHKG…WSTK), 57 to 96 (GHKR…FECN), 101 to 140 (GHEN…EFEC), 146 to 185 (PHTQ…NDWD), 192 to 231 (SHTS…NTAG), 250 to 289 (QHSR…KPDE), and 301 to 335 (AHDQ…KVTE).

It belongs to the WD repeat CIA1 family. Post-translationally, conjugated to URM1, a ubiquitin-like protein.

Essential component of the cytosolic iron-sulfur (Fe/S) protein assembly machinery. Required for the maturation of extramitochondrial Fe/S proteins. The chain is Probable cytosolic iron-sulfur protein assembly protein Ciao1 from Drosophila melanogaster (Fruit fly).